A 303-amino-acid chain; its full sequence is HTH-type transcriptional regulator LysG (303 aa).

Residues 6–62 enclose the HTH lysR-type domain; sequence LDGPQLAALAAVVELGSFDAAAERLHVTPSAVSQRIKSLEQQVGQVLVVREKPCRAT. Positions 23–42 form a DNA-binding region, H-T-H motif; it reads FDAAAERLHVTPSAVSQRIK.

The protein belongs to the LysR transcriptional regulatory family. As to quaternary structure, homodimer.

In terms of biological role, positively regulates the expression of the exporter LysE and represses its own expression. The chain is HTH-type transcriptional regulator LysG from Mycobacterium bovis (strain ATCC BAA-935 / AF2122/97).